Reading from the N-terminus, the 530-residue chain is Per os infectivity factor 1 (530 aa).

An N-terminal signal peptide occupies residues 1 to 15; it reads MHFAIILLFLLVIIA.

Forms the PIF complex together with PIF2 and PIF3. The complex also interacts with per os infectivity factor PIF0.

It is found in the virion membrane. Its function is as follows. Per os infectivity factor that mediates the specific binding of occluded virions (ODV) to the host midgut target cells. The chain is Per os infectivity factor 1 from Autographa californica nuclear polyhedrosis virus (AcMNPV).